We begin with the raw amino-acid sequence, 399 residues long: Tryptophan synthase beta chain (399 aa).

An N6-(pyridoxal phosphate)lysine modification is found at Lys-92.

It belongs to the TrpB family. Tetramer of two alpha and two beta chains. Pyridoxal 5'-phosphate is required as a cofactor.

The catalysed reaction is (1S,2R)-1-C-(indol-3-yl)glycerol 3-phosphate + L-serine = D-glyceraldehyde 3-phosphate + L-tryptophan + H2O. Its pathway is amino-acid biosynthesis; L-tryptophan biosynthesis; L-tryptophan from chorismate: step 5/5. In terms of biological role, the beta subunit is responsible for the synthesis of L-tryptophan from indole and L-serine. The sequence is that of Tryptophan synthase beta chain from Legionella pneumophila (strain Paris).